We begin with the raw amino-acid sequence, 152 residues long: MGRFIFVSFGLLVVAASLSGTGADCLSGWSSYEGHCYKAFELYKTWEDAESFCMEGVKGGHLVSIESSGEADFVAQLISENMKRLDFFVWIGLRVQGDEKQCNSEWSDGSSVSYENWIESESKTCLGLEQQTKFRKWVNLYCGQRIPFVCEA.

An N-terminal signal peptide occupies residues 1–23 (MGRFIFVSFGLLVVAASLSGTGA). Intrachain disulfides connect Cys-25/Cys-36, Cys-53/Cys-150, and Cys-125/Cys-142. Residues 32–151 (YEGHCYKAFE…CGQRIPFVCE (120 aa)) form the C-type lectin domain. Residues Ser-64, Glu-66, and Glu-70 each coordinate Ca(2+). Ca(2+) is bound at residue Glu-151.

This sequence belongs to the snaclec family. In terms of assembly, heterodimer of subunits A and B; disulfide-linked. Expressed by the venom gland.

It is found in the secreted. Anticoagulant protein which binds to the gamma-carboxyglutamic acid-domain regions of factors IX (F9) and factor X (F10) in the presence of calcium with a 1 to 1 stoichiometry. The protein is Snaclec coagulation factor IX/factor X-binding protein subunit A of Trimeresurus stejnegeri (Chinese green tree viper).